A 198-amino-acid polypeptide reads, in one-letter code: Inner membrane-spanning protein YciB (198 aa).

The next 5 helical transmembrane spans lie at 36–56 (IFSA…ILYL), 67–87 (LTLV…SETF), 90–110 (WKAP…HFIG), 133–153 (LNIA…YVAF), and 162–182 (FKVF…GIYL).

It belongs to the YciB family.

The protein localises to the cell inner membrane. In terms of biological role, plays a role in cell envelope biogenesis, maintenance of cell envelope integrity and membrane homeostasis. This Pseudomonas savastanoi pv. phaseolicola (strain 1448A / Race 6) (Pseudomonas syringae pv. phaseolicola (strain 1448A / Race 6)) protein is Inner membrane-spanning protein YciB.